We begin with the raw amino-acid sequence, 323 residues long: MPTITEDCIDGFQQYYSRPPERPKKKSLKQMVYDSEDNSYFGRSMDSWAKIGIFYVAFYGVLAALVAICMWAFFQTLDPRIPKWTLDRSLIGTNPGLGFRPLPPVDNVESTLIWYKGTQHENYKHWTDSLDDFLAVYKVPGLTPGRGQNIYNCDYNQPPPKGQVCDVDIKTWSPCTKENNYSYHKSAPCIFLKLNKIYGWIPEYYNRSNDLPANMPASLKTYIAEVEKTQPEKLNTIWVSCEGENPADQENIGAVNYLPIRGFPGYFYPYQNSEGYLSPLVAVHFQRPKRGIIINVECRAWARNIIHDRKERIGSVHYELLID.

At 1 to 50 (MPTITEDCIDGFQQYYSRPPERPKKKSLKQMVYDSEDNSYFGRSMDSWAK) the chain is on the cytoplasmic side. A helical; Signal-anchor for type II membrane protein membrane pass occupies residues 51–71 (IGIFYVAFYGVLAALVAICMW). Over 72–323 (AFFQTLDPRI…GSVHYELLID (252 aa)) the chain is Extracellular. Intrachain disulfides connect Cys-153–Cys-165 and Cys-175–Cys-189. Residues Asn-180 and Asn-206 are each glycosylated (N-linked (GlcNAc...) asparagine). Cys-241 and Cys-298 form a disulfide bridge.

It belongs to the X(+)/potassium ATPases subunit beta family. The sodium/potassium-transporting ATPase is composed of a catalytic alpha subunit, an auxiliary non-catalytic beta subunit and an additional regulatory subunit. In terms of tissue distribution, in embryos, it is expressed in the neurons of the CNS and PNS, in Garland cells and posterior spiracles. In adults, it shows a nervous system specific distribution: optic lobes, brain, thoracic ganglia and axonal pathways in the leg. Both isoforms concentrate in the adult head, isoform 2.2 being predominant. Both isoforms are weakly expressed in the thorax and very poorly expressed in the abdomen.

The protein resides in the cell membrane. Functionally, this is the non-catalytic component of the active enzyme, which catalyzes the hydrolysis of ATP coupled with the exchange of Na(+) and K(+) ions across the plasma membrane. The beta subunit regulates, through assembly of alpha/beta heterodimers, the number of sodium pumps transported to the plasma membrane. This Drosophila melanogaster (Fruit fly) protein is Sodium/potassium-transporting ATPase subunit beta-2 (nrv2).